A 291-amino-acid chain; its full sequence is Venom metalloproteinase inhibitor DM43 (291 aa).

Ig-like V-type domains lie at 22-79 (TNVT…ILTS) and 114-171 (GLET…PASA). N-linked (GlcNAc...) asparagine glycosylation is present at asparagine 23. 2 cysteine pairs are disulfide-bonded: cysteine 28-cysteine 74 and cysteine 121-cysteine 163. Asparagine 156, asparagine 160, and asparagine 175 each carry an N-linked (GlcNAc...) asparagine glycan. The Ig-like V-type 3 domain occupies 191–288 (PKANFYILND…DSNVLELDLS (98 aa)). The cysteines at positions 213 and 265 are disulfide-linked.

As to quaternary structure, homodimer. N-glycosylated. As to expression, blood and milk.

Metalloproteinase inhibitor. In Didelphis marsupialis (Southern opossum), this protein is Venom metalloproteinase inhibitor DM43.